A 96-amino-acid polypeptide reads, in one-letter code: (4S)-4-hydroxy-5-phosphonooxypentane-2,3-dione isomerase (96 aa).

Residues 2–91 (HVTLVEINVH…MTGPRTKKVF (90 aa)) enclose the ABM domain.

The protein belongs to the LsrG family. In terms of assembly, homodimer.

The protein resides in the cytoplasm. It carries out the reaction (2S)-2-hydroxy-3,4-dioxopentyl phosphate = 3-hydroxy-2,4-dioxopentyl phosphate. Its function is as follows. Involved in the degradation of phospho-AI-2, thereby terminating induction of the lsr operon and closing the AI-2 signaling cycle. Catalyzes the conversion of (4S)-4-hydroxy-5-phosphonooxypentane-2,3-dione (P-DPD) to 3-hydroxy-5-phosphonooxypentane-2,4-dione (P-HPD). This chain is (4S)-4-hydroxy-5-phosphonooxypentane-2,3-dione isomerase, found in Salmonella typhimurium (strain LT2 / SGSC1412 / ATCC 700720).